A 390-amino-acid chain; its full sequence is Elongation factor Ts 2, mitochondrial (390 aa).

Residues 1 to 24 constitute a mitochondrion transit peptide; that stretch reads MMIFSTAVLRLCATSRIGAVTKRA. Residues 30–40 show a composition bias toward low complexity; the sequence is SSASSSSSSSS. The interval 30-54 is disordered; it reads SSASSSSSSSSPTQSMPPQRYTHHQ.

The protein belongs to the EF-Ts family.

It localises to the mitochondrion. In terms of biological role, associates with the EF-Tu.GDP complex and induces the exchange of GDP to GTP. It remains bound to the aminoacyl-tRNA.EF-Tu.GTP complex up to the GTP hydrolysis stage on the ribosome. In Thalassiosira pseudonana (Marine diatom), this protein is Elongation factor Ts 2, mitochondrial.